Reading from the N-terminus, the 165-residue chain is Urease accessory protein UreE (165 aa).

The interval 137-156 is disordered; the sequence is EAGAYQSAPHGHSHAHGHDH.

This sequence belongs to the UreE family.

It localises to the cytoplasm. Functionally, involved in urease metallocenter assembly. Binds nickel. Probably functions as a nickel donor during metallocenter assembly. The polypeptide is Urease accessory protein UreE (Pseudomonas putida (strain GB-1)).